The sequence spans 55 residues: Antiviral protein GAP-31 (55 aa).

The disordered stretch occupies residues 29 to 55; sequence KPEGNSHGIPSLRKSSDDPGSSFVVAG.

Belongs to the ribosome-inactivating protein family. Type 1 RIP subfamily.

The enzyme catalyses Endohydrolysis of the N-glycosidic bond at one specific adenosine on the 28S rRNA.. Its function is as follows. Single-chain ribosome-inactivating protein, possessing high antiviral potency and low toxicity to normal cells in culture and to intact animals. Capable of inhibiting HIV-1 infection and replication. The sequence is that of Antiviral protein GAP-31 from Suregada multiflora (False lime).